A 344-amino-acid chain; its full sequence is L-rhamnose-proton symporter (344 aa).

10 consecutive transmembrane segments (helical) span residues 4–24, 38–58, 68–88, 101–121, 137–157, 175–195, 214–234, 259–279, 290–310, and 323–343; these read AITM…CFYA, WSVG…ALLL, FSLS…IGNI, MGIG…TPII, TLLG…AGQL, LVLA…MNAA, LPSY…FCFI, VLLS…YAWG, ISWM…GLVL, and VLSL…IGMA.

It belongs to the L-rhamnose transporter (TC 2.A.7.6) family.

Its subcellular location is the cell inner membrane. It catalyses the reaction L-rhamnopyranose(in) + H(+)(in) = L-rhamnopyranose(out) + H(+)(out). Its function is as follows. Uptake of L-rhamnose across the cytoplasmic membrane with the concomitant transport of protons into the cell (symport system). This chain is L-rhamnose-proton symporter, found in Escherichia coli O1:K1 / APEC.